The following is an 87-amino-acid chain: Phosphocarrier protein HPr (87 aa).

Residues 1–87 (MAEKTFTITA…EEVIKEGLGE (87 aa)) enclose the HPr domain. The active-site Pros-phosphohistidine intermediate is the H15. At S46 the chain carries Phosphoserine; by HPrK/P.

The protein belongs to the HPr family.

The protein resides in the cytoplasm. Phosphorylation on Ser-46 inhibits the phosphoryl transfer from enzyme I to HPr. In terms of biological role, general (non sugar-specific) component of the phosphoenolpyruvate-dependent sugar phosphotransferase system (sugar PTS). This major carbohydrate active-transport system catalyzes the phosphorylation of incoming sugar substrates concomitantly with their translocation across the cell membrane. The phosphoryl group from phosphoenolpyruvate (PEP) is transferred to the phosphoryl carrier protein HPr by enzyme I. Phospho-HPr then transfers it to the PTS EIIA domain. Its function is as follows. P-Ser-HPr interacts with the catabolite control protein A (CcpA), forming a complex that binds to DNA at the catabolite response elements cre, operator sites preceding a large number of catabolite-regulated genes. Thus, P-Ser-HPr is a corepressor in carbon catabolite repression (CCR), a mechanism that allows bacteria to coordinate and optimize the utilization of available carbon sources. P-Ser-HPr also plays a role in inducer exclusion, in which it probably interacts with several non-PTS permeases and inhibits their transport activity. The chain is Phosphocarrier protein HPr (ptsH) from Halalkalibacterium halodurans (strain ATCC BAA-125 / DSM 18197 / FERM 7344 / JCM 9153 / C-125) (Bacillus halodurans).